Reading from the N-terminus, the 101-residue chain is Putative pterin-4-alpha-carbinolamine dehydratase (101 aa).

The protein belongs to the pterin-4-alpha-carbinolamine dehydratase family.

The enzyme catalyses (4aS,6R)-4a-hydroxy-L-erythro-5,6,7,8-tetrahydrobiopterin = (6R)-L-erythro-6,7-dihydrobiopterin + H2O. This chain is Putative pterin-4-alpha-carbinolamine dehydratase, found in Rhodopseudomonas palustris (strain BisB18).